The following is a 510-amino-acid chain: Lysine--tRNA ligase (510 aa).

Glu420 and Glu427 together coordinate Mg(2+).

Belongs to the class-II aminoacyl-tRNA synthetase family. As to quaternary structure, homodimer. It depends on Mg(2+) as a cofactor.

Its subcellular location is the cytoplasm. The catalysed reaction is tRNA(Lys) + L-lysine + ATP = L-lysyl-tRNA(Lys) + AMP + diphosphate. This Vibrio vulnificus (strain YJ016) protein is Lysine--tRNA ligase.